Reading from the N-terminus, the 477-residue chain is Calcium uptake protein 1, mitochondrial (477 aa).

The transit peptide at 1–33 (MFRLNTLSALAELAVGSRWYHGASQPTQTKRRL) directs the protein to the mitochondrion. The segment at 57–107 (AESPPCVNSKKPDTEDKERNKDSGEVSSREGRAADAAAEPYPEDKKKKRSG) is disordered. A compositionally biased stretch (basic and acidic residues) spans 66 to 89 (KKPDTEDKERNKDSGEVSSREGRA). Residues 101-112 (KKKKRSGFRDRK) are polybasic region. A Phosphoserine; by PKB modification is found at serine 124. The tract at residues 128–131 (KIFR) is k/R-ring. The region spanning 220-255 (TPQRNFEIAFKMFDLNGDGEVDMEEFEQVQSIIRSQ) is the EF-hand 1 domain. The Ca(2+) site is built by aspartate 233, asparagine 235, aspartate 237, glutamate 239, and glutamate 244. The segment at 261–265 (RHRDR) is k/R-ring. Residues 356–376 (KDGKGLTFQEVENFFTFLKNI) form the EF-hand 2; degenerate domain. The EF-hand 3 domain maps to 410–445 (LSDHVCDVVFALFDCDGNGELSNKEFVSIMKQRLMR). Residues aspartate 423, aspartate 425, asparagine 427, glutamate 429, and glutamate 434 each contribute to the Ca(2+) site. Arginine 457 bears the Asymmetric dimethylarginine mark. Residues 457–467 (RLMQAMWKCAQ) are C-helix region.

This sequence belongs to the MICU1 family. MICU1 subfamily. Heterodimer; disulfide-linked; heterodimerizes with MICU2 or MICU3. Homodimer; disulfide-linked. Component of the uniplex complex, composed of MCU, EMRE/SMDT1, MICU1 and MICU2 (or MICU3) in a 4:4:1:1 stoichiometry. The composition of calcium sensors within the uniplex complex can differ depending on tissues: a MICU1 homodimer can be present instead of the MICU1-MICU2 heterodimer in skeletal-muscle and kidney. MICU1 is recruited to the uniplex complex by EMRE/SMDT1, and it associates with MCU at low calcium levels, occluding the pore of the MCU channel. Associates with the MICOS complex. Interacts with SLC25A23. Interacts with CHCHD4/MIA40; which introduces the interchain disulfide bond with MICU2. Interacts (when methylated) with UCP2; leading to decrease the calcium sensitivity of MICU1. As to quaternary structure, heterodimer; disulfide-linked; heterodimerizes with MICU2 or MICU3. Heterodimerizes with MICU3 in skeletal muscle. Component of the uniplex complex, composed of MCU, EMRE/SMDT1, MICU1 and MICU2 (or MICU3) in a 4:4:1:1 stoichiometry. Also localizes to mitochondrial cristae junctions. In terms of processing, phosphorylation at Ser-124 by AKT1 impairs its maturation and stability. Post-translationally, asymmetric dimethylation at Arg-457 by PRMT1 decreases the calcium sensitivity of MICU1 by promoting interaction with UCP2. Degraded by YME1L1 when not complexed as homodimer or heterodimer. Not degraded when complexed as homodimer or heterodimer; the presence of the interchain disulfide bond protecting MICU1 from degradation by YME1L1. Expressed in skeletal muscle, heart, kidney, liver, brain, lung, fat and spleen. As to expression, specifically expressed in the skeletal muscle.

It localises to the mitochondrion intermembrane space. Its subcellular location is the mitochondrion inner membrane. Its function is as follows. Calcium sensor of the mitochondrial calcium uniporter (MCU) channel, which senses calcium level via its EF-hand domains. MICU1 and MICU2 (or MICU3) form a disulfide-linked heterodimer that stimulates and inhibits MCU activity, depending on the concentration of calcium. At low calcium levels, MICU1 occludes the pore of the MCU channel, preventing mitochondrial calcium uptake. At higher calcium levels, calcium-binding to MICU1 and MICU2 (or MICU3) induces a conformational change that weakens MCU-MICU1 interactions and moves the MICU1-MICU2 heterodimer away from the pore, allowing calcium permeation through the MCU channel. Also required to protect against manganese toxicity by preventing manganese uptake by MCU: mechanistically, manganese-binding to its EF-hand domains does not induce any conformational change, maintaining MCU pore occlusion. Acts as a regulator of mitochondrial cristae structure independently of its ability to regulate the mitochondrial calcium uniporter channel. Regulates glucose-dependent insulin secretion in pancreatic beta-cells by regulating mitochondrial calcium uptake. Induces T-helper 1-mediated autoreactivity, which is accompanied by the release of IFNG. In terms of biological role, isoform that regulates mitochondrial calcium uniporter (MCU) in the skeletal muscle. Compared to other isoforms, this isoform has higher affinity for calcium, promoting mitochondrial calcium uptake at lower calcium concentrations. This allows a rapid response of mitochondrial metabolism and ensures sustained ATP production needed for resistance and strenuous exercise. This is Calcium uptake protein 1, mitochondrial from Mus musculus (Mouse).